The sequence spans 435 residues: Nicotinate phosphoribosyltransferase (435 aa).

His230 is modified (phosphohistidine; by autocatalysis).

Belongs to the NAPRTase family. In terms of processing, transiently phosphorylated on a His residue during the reaction cycle. Phosphorylation strongly increases the affinity for substrates and increases the rate of nicotinate D-ribonucleotide production. Dephosphorylation regenerates the low-affinity form of the enzyme, leading to product release.

It catalyses the reaction nicotinate + 5-phospho-alpha-D-ribose 1-diphosphate + ATP + H2O = nicotinate beta-D-ribonucleotide + ADP + phosphate + diphosphate. The protein operates within cofactor biosynthesis; NAD(+) biosynthesis; nicotinate D-ribonucleotide from nicotinate: step 1/1. Its function is as follows. Catalyzes the synthesis of beta-nicotinate D-ribonucleotide from nicotinate and 5-phospho-D-ribose 1-phosphate at the expense of ATP. This chain is Nicotinate phosphoribosyltransferase, found in Vibrio cholerae serotype O1 (strain ATCC 39541 / Classical Ogawa 395 / O395).